The primary structure comprises 228 residues: UPF0758 protein H16_A3033 (228 aa).

In terms of domain architecture, MPN spans 102-224 (GFDGPAAVRN…IRSLADCCDR (123 aa)). Residues H173, H175, and D186 each contribute to the Zn(2+) site. Positions 173–186 (HNHPRGTTAPSQSD) match the JAMM motif motif.

The protein belongs to the UPF0758 family.

The polypeptide is UPF0758 protein H16_A3033 (Cupriavidus necator (strain ATCC 17699 / DSM 428 / KCTC 22496 / NCIMB 10442 / H16 / Stanier 337) (Ralstonia eutropha)).